We begin with the raw amino-acid sequence, 389 residues long: Succinate--CoA ligase [ADP-forming] subunit beta (389 aa).

The ATP-grasp domain maps to 9–244 (KQLLAEYGIP…KTQEDPTEVI (236 aa)). Residues lysine 46, 53 to 55 (GRG), glycine 102, and glutamate 107 contribute to the ATP site. Residues asparagine 199 and aspartate 213 each contribute to the Mg(2+) site. Substrate contacts are provided by residues asparagine 264 and 321-323 (GIV).

Belongs to the succinate/malate CoA ligase beta subunit family. As to quaternary structure, heterotetramer of two alpha and two beta subunits. Mg(2+) serves as cofactor.

The enzyme catalyses succinate + ATP + CoA = succinyl-CoA + ADP + phosphate. It carries out the reaction GTP + succinate + CoA = succinyl-CoA + GDP + phosphate. The protein operates within carbohydrate metabolism; tricarboxylic acid cycle; succinate from succinyl-CoA (ligase route): step 1/1. Functionally, succinyl-CoA synthetase functions in the citric acid cycle (TCA), coupling the hydrolysis of succinyl-CoA to the synthesis of either ATP or GTP and thus represents the only step of substrate-level phosphorylation in the TCA. The beta subunit provides nucleotide specificity of the enzyme and binds the substrate succinate, while the binding sites for coenzyme A and phosphate are found in the alpha subunit. In Stenotrophomonas maltophilia (strain R551-3), this protein is Succinate--CoA ligase [ADP-forming] subunit beta.